We begin with the raw amino-acid sequence, 214 residues long: Small ribosomal subunit protein eS1 (214 aa).

This sequence belongs to the eukaryotic ribosomal protein eS1 family.

This chain is Small ribosomal subunit protein eS1, found in Aeropyrum pernix (strain ATCC 700893 / DSM 11879 / JCM 9820 / NBRC 100138 / K1).